Consider the following 299-residue polypeptide: Probable lipid kinase YegS (299 aa).

Positions 2–133 (ANFPASLLIL…IDMARVNDKT (132 aa)) constitute a DAGKc domain. Residues Thr-40, 66–72 (GDGTINE), and Thr-95 contribute to the ATP site. Leu-215, Asp-218, and Leu-220 together coordinate Mg(2+). Glu-271 functions as the Proton acceptor in the catalytic mechanism.

This sequence belongs to the diacylglycerol/lipid kinase family. YegS lipid kinase subfamily. Requires Mg(2+) as cofactor. Ca(2+) is required as a cofactor.

It is found in the cytoplasm. Probably phosphorylates lipids; the in vivo substrate is unknown. The sequence is that of Probable lipid kinase YegS from Salmonella agona (strain SL483).